Consider the following 115-residue polypeptide: MNMLMVMLVNITLSSCLIMIAFWLPQLNLYTEKANPYECGFDPMSSARLPFSMKFFLVAITFFLFDLEIALLLPLPWAIQMYNINTMMLTAFILVSVLALGLAYEWMQKGLEWTE.

The next 3 helical transmembrane spans lie at 4–24 (LMVMLVNITLSSCLIMIAFWL), 55–75 (FFLVAITFFLFDLEIALLLPL), and 87–107 (MMLTAFILVSVLALGLAYEWM).

This sequence belongs to the complex I subunit 3 family. Core subunit of respiratory chain NADH dehydrogenase (Complex I) which is composed of 45 different subunits. Interacts with TMEM186. Interacts with TMEM242.

It is found in the mitochondrion inner membrane. It carries out the reaction a ubiquinone + NADH + 5 H(+)(in) = a ubiquinol + NAD(+) + 4 H(+)(out). Its function is as follows. Core subunit of the mitochondrial membrane respiratory chain NADH dehydrogenase (Complex I) which catalyzes electron transfer from NADH through the respiratory chain, using ubiquinone as an electron acceptor. Essential for the catalytic activity of complex I. The sequence is that of NADH-ubiquinone oxidoreductase chain 3 from Peromyscus mexicanus (Mexican deer mouse).